The chain runs to 264 residues: Protein-L-isoaspartate O-methyltransferase (264 aa).

The disordered stretch occupies residues methionine 1–alanine 49. The segment covering proline 24 to threonine 35 has biased composition (polar residues). Residue serine 112 is part of the active site.

Belongs to the methyltransferase superfamily. L-isoaspartyl/D-aspartyl protein methyltransferase family.

The protein localises to the cytoplasm. The catalysed reaction is [protein]-L-isoaspartate + S-adenosyl-L-methionine = [protein]-L-isoaspartate alpha-methyl ester + S-adenosyl-L-homocysteine. Its function is as follows. Catalyzes the methyl esterification of L-isoaspartyl residues in peptides and proteins that result from spontaneous decomposition of normal L-aspartyl and L-asparaginyl residues. It plays a role in the repair and/or degradation of damaged proteins. The protein is Protein-L-isoaspartate O-methyltransferase of Bordetella avium (strain 197N).